The primary structure comprises 475 residues: Ribulose bisphosphate carboxylase large chain (475 aa).

Residues 1–2 constitute a propeptide that is removed on maturation; the sequence is MS. P3 carries the post-translational modification N-acetylproline. K14 bears the N6,N6,N6-trimethyllysine mark. Residues N123 and T173 each contribute to the substrate site. K175 serves as the catalytic Proton acceptor. A substrate-binding site is contributed by K177. Mg(2+) contacts are provided by K201, D203, and E204. An N6-carboxylysine modification is found at K201. Catalysis depends on H294, which acts as the Proton acceptor. R295, H327, and S379 together coordinate substrate.

The protein belongs to the RuBisCO large chain family. Type I subfamily. As to quaternary structure, heterohexadecamer of 8 large chains and 8 small chains; disulfide-linked. The disulfide link is formed within the large subunit homodimers. It depends on Mg(2+) as a cofactor. In terms of processing, the disulfide bond which can form in the large chain dimeric partners within the hexadecamer appears to be associated with oxidative stress and protein turnover.

The protein localises to the plastid. It localises to the chloroplast. The enzyme catalyses 2 (2R)-3-phosphoglycerate + 2 H(+) = D-ribulose 1,5-bisphosphate + CO2 + H2O. The catalysed reaction is D-ribulose 1,5-bisphosphate + O2 = 2-phosphoglycolate + (2R)-3-phosphoglycerate + 2 H(+). RuBisCO catalyzes two reactions: the carboxylation of D-ribulose 1,5-bisphosphate, the primary event in carbon dioxide fixation, as well as the oxidative fragmentation of the pentose substrate in the photorespiration process. Both reactions occur simultaneously and in competition at the same active site. The sequence is that of Ribulose bisphosphate carboxylase large chain from Populus tremuloides (Quaking aspen).